Reading from the N-terminus, the 265-residue chain is Cyclin-C (265 aa).

The region spanning 48–151 is the Cyclin N-terminal domain; the sequence is IQVLGEQLKL…LLENLDCCLI (104 aa).

It belongs to the cyclin family. Cyclin C subfamily. In terms of assembly, component of the Cdk8 module of the Mediator complex.

Its subcellular location is the nucleus. Component of the Mediator complex, a coactivator involved in regulated gene transcription of nearly all RNA polymerase II-dependent genes. Mediator functions as a bridge to convey information from gene-specific regulatory proteins to the basal RNA polymerase II transcription machinery. Mediator is recruited to promoters by direct interactions with regulatory proteins and serves as a scaffold for the assembly of a functional preinitiation complex with RNA polymerase II and the general transcription factors. Binds to and activates cyclin-dependent kinase Cdk8 that phosphorylates the CTD (C-terminal domain) of the large subunit of RNA polymerase II (RNAp II), which may inhibit the formation of a transcription initiation complex. The chain is Cyclin-C (CycC) from Aedes aegypti (Yellowfever mosquito).